A 343-amino-acid polypeptide reads, in one-letter code: Ubiquitin carboxyl-terminal hydrolase isozyme L5 (343 aa).

The 213-residue stretch at 6–218 folds into the UCH catalytic domain; that stretch reads GWCTIESDPG…IRFNLMAVIK (213 aa). Cys-83 functions as the Nucleophile in the catalytic mechanism. Residue His-157 is the Proton donor of the active site. The interval 242-266 is disordered; it reads LSELNSGSGGDNKEESGGATPTTKE. A ULD domain is found at 306–334; it reads NFTPLILNLIKGLAEKDNLQPLIQKAKDQ.

This sequence belongs to the peptidase C12 family. In terms of assembly, component of the 19S (PA700) regulatory complex of the 26S proteasome.

The protein localises to the cytoplasm. The protein resides in the nucleus. The enzyme catalyses Thiol-dependent hydrolysis of ester, thioester, amide, peptide and isopeptide bonds formed by the C-terminal Gly of ubiquitin (a 76-residue protein attached to proteins as an intracellular targeting signal).. Functionally, protease that specifically cleaves 'Lys-48'-linked polyubiquitin chains. Deubiquitinating enzyme associated with the 19S regulatory subunit of the 26S proteasome. The sequence is that of Ubiquitin carboxyl-terminal hydrolase isozyme L5 (uch2) from Dictyostelium discoideum (Social amoeba).